Here is a 483-residue protein sequence, read N- to C-terminus: Uroporphyrinogen-III C-methyltransferase (483 aa).

It belongs to the precorrin methyltransferase family.

The catalysed reaction is uroporphyrinogen III + 2 S-adenosyl-L-methionine = precorrin-2 + 2 S-adenosyl-L-homocysteine + H(+). The protein is Uroporphyrinogen-III C-methyltransferase (nasF) of Bacillus subtilis (strain 168).